A 554-amino-acid chain; its full sequence is Valerianol synthase TPS1E (554 aa).

Aspartate 307 and aspartate 311 together coordinate Mg(2+). The DDXXD motif motif lies at 326 to 330 (VQRWD). Residues aspartate 452, serine 456, and glutamate 460 each contribute to the Mg(2+) site.

The protein belongs to the terpene synthase family. Requires Mg(2+) as cofactor.

It carries out the reaction (2E,6E)-farnesyl diphosphate + H2O = valerianol + diphosphate. It functions in the pathway secondary metabolite biosynthesis; terpenoid biosynthesis. Its function is as follows. Terpene synthase that catalyzes the biosynthesis of the terpene valerianol, which is a volatile compound of floral scent. The protein is Valerianol synthase TPS1E of Camellia hiemalis (Camellia).